The sequence spans 334 residues: Glucan endo-1,3-beta-glucosidase GII (334 aa).

The first 28 residues, Met-1–Ser-28, serve as a signal peptide directing secretion. Glu-122 serves as the catalytic Proton donor. Catalysis depends on Glu-259, which acts as the Nucleophile.

This sequence belongs to the glycosyl hydrolase 17 family.

It carries out the reaction Hydrolysis of (1-&gt;3)-beta-D-glucosidic linkages in (1-&gt;3)-beta-D-glucans.. In terms of biological role, may provide a degree of protection against microbial invasion of germinated barley grain through its ability to degrade fungal cell wall polysaccharides. Hydrolyzes laminarin in vitro. In Hordeum vulgare (Barley), this protein is Glucan endo-1,3-beta-glucosidase GII.